We begin with the raw amino-acid sequence, 145 residues long: Bacilliredoxin SSP1241 (145 aa).

It belongs to the bacilliredoxin family.

This chain is Bacilliredoxin SSP1241, found in Staphylococcus saprophyticus subsp. saprophyticus (strain ATCC 15305 / DSM 20229 / NCIMB 8711 / NCTC 7292 / S-41).